A 919-amino-acid chain; its full sequence is Envelope glycoprotein B (919 aa).

Residues 1 to 28 (MSKDSTSLGVRTIVIACLVLLGCCIVEA) form the signal peptide. The Virion surface segment spans residues 29–788 (VPTTPSSQPS…SGIASFINNP (760 aa)). Disulfide bonds link Cys81-Cys586, Cys98-Cys542, Cys172-Cys237, Cys330-Cys378, and Cys607-Cys647. A glycan (N-linked (GlcNAc...) asparagine; by host) is linked at Asn106. Residues 138–144 (VWKGYSH) form an involved in fusion and/or binding to host membrane region. Asn216 carries an N-linked (GlcNAc...) asparagine; by host glycan. The tract at residues 223 to 231 (GWMPWRHYT) is involved in fusion and/or binding to host membrane. N-linked (GlcNAc...) asparagine; by host glycans are attached at residues Asn321, Asn364, Asn438, Asn456, Asn493, Asn496, and Asn499. 2 N-linked (GlcNAc...) asparagine; by host glycosylation sites follow: Asn666 and Asn688. Hydrophobic membrane proximal region regions lie at residues 733-786 (IDSV…SFIN) and 765-785 (TLVL…ASFI). The chain crosses the membrane as a helical span at residues 789–809 (FGGLAIGLLVIAGLVAAFFAY). Residues 810–919 (RYVMQLRSNP…DDPMESEKMV (110 aa)) are Intravirion-facing. Positions 864–867 (YMSM) match the Golgi targeting motif. Positions 900–919 (RGPKYTRLREDDPMESEKMV) are disordered. The Internalization motif signature appears at 904-907 (YTRL). A compositionally biased stretch (basic and acidic residues) spans 906–919 (RLREDDPMESEKMV).

It belongs to the herpesviridae glycoprotein B family. As to quaternary structure, homotrimer; disulfide-linked. Binds to heparan sulfate proteoglycans. Interacts with gH/gL heterodimer. In terms of processing, a proteolytic cleavage by host furin generates two subunits that remain linked by disulfide bonds.

It localises to the virion membrane. Its subcellular location is the host cell membrane. The protein resides in the host endosome membrane. The protein localises to the host Golgi apparatus membrane. Envelope glycoprotein that forms spikes at the surface of virion envelope. Essential for the initial attachment to heparan sulfate moieties of the host cell surface proteoglycans. Involved in fusion of viral and cellular membranes leading to virus entry into the host cell. Following initial binding to its host receptors, membrane fusion is mediated by the fusion machinery composed at least of gB and the heterodimer gH/gL. May be involved in the fusion between the virion envelope and the outer nuclear membrane during virion egress. In Equus caballus (Horse), this protein is Envelope glycoprotein B.